We begin with the raw amino-acid sequence, 447 residues long: Phosphoglucosamine mutase (447 aa).

S103 acts as the Phosphoserine intermediate in catalysis. Mg(2+) is bound by residues S103, D242, D244, and D246. S103 carries the phosphoserine modification.

The protein belongs to the phosphohexose mutase family. Requires Mg(2+) as cofactor. In terms of processing, activated by phosphorylation.

It catalyses the reaction alpha-D-glucosamine 1-phosphate = D-glucosamine 6-phosphate. In terms of biological role, catalyzes the conversion of glucosamine-6-phosphate to glucosamine-1-phosphate. The chain is Phosphoglucosamine mutase from Marinobacter nauticus (strain ATCC 700491 / DSM 11845 / VT8) (Marinobacter aquaeolei).